The chain runs to 236 residues: LHFPL tetraspan subfamily member 3 protein (236 aa).

4 helical membrane passes run 36-56 (IGVL…VCFI), 110-130 (FFIG…TLFF), 140-160 (ICAW…MIFP), and 191-211 (ILAI…FVLG).

It belongs to the LHFP family.

It localises to the membrane. The polypeptide is LHFPL tetraspan subfamily member 3 protein (Homo sapiens (Human)).